Consider the following 862-residue polypeptide: Rab GTPase-binding effector protein 1 (862 aa).

Ala2 is modified (N-acetylalanine). Residues 11 to 345 (DVSLQQRVAE…KKADVEEEIK (335 aa)) adopt a coiled-coil conformation. An N6-acetyllysine modification is found at Lys282. The disordered stretch occupies residues 315-338 (ELKKKDQEDDEQQRLNKRKDHKKA). Phosphoserine occurs at positions 374, 377, and 407. Thr408 carries the phosphothreonine modification. Ser410 carries the phosphoserine modification. The interaction with AP1G1, AP1G2, GGA1, GGA2 and GGA3 stretch occupies residues 435–447 (DESDFGPLVGADS). Positions 534-816 (DMCSNYEKQL…LQTELDVSEQ (283 aa)) form a coiled coil.

It belongs to the rabaptin family. As to quaternary structure, homodimer when bound to RAB5A. Heterodimer with RABGEF1. The heterodimer binds RAB4A and RAB5A that have been activated by GTP-binding. Interacts with TSC2. Interacts with GGA1 (via GAE domain), GGA2 (via GAE domain) and GGA3 (via GAE domain). Interacts with AP1G1 (via GAE domain). Interacts with AP1G2 (via GAE domain). Interacts with ECPAS. Interacts with KCNH1. Interacts with PKD1 (via C-terminal domain) and GGA1; the interactions recruit PKD1:PKD2 complex to GGA1 and ARL3 at trans-Golgi network. In terms of processing, proteolytic cleavage by caspases in apoptotic cells causes loss of endosome fusion activity.

Its subcellular location is the cytoplasm. It localises to the early endosome. It is found in the recycling endosome. The protein localises to the cytoplasmic vesicle. Its function is as follows. Rab effector protein acting as linker between gamma-adaptin, RAB4A and RAB5A. Involved in endocytic membrane fusion and membrane trafficking of recycling endosomes. Involved in KCNH1 channels trafficking to and from the cell membrane. Stimulates RABGEF1 mediated nucleotide exchange on RAB5A. Mediates the traffic of PKD1:PKD2 complex from the endoplasmic reticulum through the Golgi to the cilium. This chain is Rab GTPase-binding effector protein 1 (RABEP1), found in Homo sapiens (Human).